A 456-amino-acid chain; its full sequence is Asparagine--tRNA ligase (456 aa).

Belongs to the class-II aminoacyl-tRNA synthetase family. As to quaternary structure, homodimer.

The protein localises to the cytoplasm. The catalysed reaction is tRNA(Asn) + L-asparagine + ATP = L-asparaginyl-tRNA(Asn) + AMP + diphosphate + H(+). In Mycoplasma genitalium (strain ATCC 33530 / DSM 19775 / NCTC 10195 / G37) (Mycoplasmoides genitalium), this protein is Asparagine--tRNA ligase.